A 423-amino-acid polypeptide reads, in one-letter code: Adenylosuccinate synthetase (423 aa).

GTP contacts are provided by residues 12-18 and 40-42; these read GDEGKGK and GHT. D13 serves as the catalytic Proton acceptor. D13 and G40 together coordinate Mg(2+). Residues 13 to 16, 38 to 41, T129, R143, Q224, T239, and R303 contribute to the IMP site; these read DEGK and NAGH. H41 (proton donor) is an active-site residue. 299-305 is a binding site for substrate; that stretch reads SVTGRQR. GTP is bound by residues R305, 331-333, and 412-414; these read KGD and SVG.

It belongs to the adenylosuccinate synthetase family. In terms of assembly, homodimer. Requires Mg(2+) as cofactor.

The protein localises to the cytoplasm. It carries out the reaction IMP + L-aspartate + GTP = N(6)-(1,2-dicarboxyethyl)-AMP + GDP + phosphate + 2 H(+). The protein operates within purine metabolism; AMP biosynthesis via de novo pathway; AMP from IMP: step 1/2. Its function is as follows. Plays an important role in the de novo pathway of purine nucleotide biosynthesis. Catalyzes the first committed step in the biosynthesis of AMP from IMP. The sequence is that of Adenylosuccinate synthetase from Flavobacterium psychrophilum (strain ATCC 49511 / DSM 21280 / CIP 103535 / JIP02/86).